A 592-amino-acid polypeptide reads, in one-letter code: Catabolite repression protein creC (592 aa).

Residues 119-140 form a disordered region; the sequence is NSALAAAPVKDPSKKRKPKNNI. 4 WD repeats span residues 248-288, 327-368, 369-408, and 411-455; these read INSS…ALFI, LANQ…DVFR, SYYG…IIAR, and GHDS…LHRP. Disordered regions lie at residues 459 to 513 and 556 to 592; these read HQTS…HPVE and WDRP…MGSL. 2 stretches are compositionally biased toward polar residues: residues 484-499 and 564-576; these read SSGN…TAAD and SDNY…SETL. The stretch at 529–566 is one WD 5 repeat; it reads VGEDPICWLGFQEDTIMTSSLEGHIRTWDRPRENISDN.

The protein belongs to the WD repeat creC family. Interacts with creB.

Its function is as follows. Component of the regulatory network controlling carbon source utilization through ubiquitination and deubiquitination involving creA, creB, creC, creD and acrB. Required to prevent the proteolysis of the CreB deubiquitinating enzyme in the absence of carbon catabolite repression. CreB deubiquitinating enzyme stabilized in a complex with the CreC leads to the expression of genes such as those in the proline and quinate pathways. This chain is Catabolite repression protein creC (creC), found in Emericella nidulans (strain FGSC A4 / ATCC 38163 / CBS 112.46 / NRRL 194 / M139) (Aspergillus nidulans).